A 144-amino-acid polypeptide reads, in one-letter code: Deoxyuridine 5'-triphosphate nucleotidohydrolase (144 aa).

Ser-66, Gly-79, Asp-82, Tyr-85, Lys-90, Arg-134, Phe-139, and Gly-140 together coordinate dUMP.

This sequence belongs to the dUTPase family. Homotrimer. Mg(2+) is required as a cofactor.

The enzyme catalyses dUTP + H2O = dUMP + diphosphate + H(+). Its pathway is pyrimidine metabolism; dUMP biosynthesis; dUMP from dCTP (dUTP route): step 2/2. Involved in nucleotide metabolism via production of dUMP, the immediate precursor of thymidine nucleotides, and decreases the intracellular concentration of dUTP so that uracil cannot be incorporated into DNA. The sequence is that of Deoxyuridine 5'-triphosphate nucleotidohydrolase (DUT1) from Candida glabrata (strain ATCC 2001 / BCRC 20586 / JCM 3761 / NBRC 0622 / NRRL Y-65 / CBS 138) (Yeast).